The chain runs to 355 residues: WAT1-related protein At1g25270 (355 aa).

The next 10 helical transmembrane spans lie at 4 to 24 (VVAM…FKIT), 33 to 53 (VLVA…ALIF), 65 to 85 (LLLL…ILYL), 94 to 114 (TFSA…GLVF), 134 to 154 (LLGA…IHIW), 175 to 195 (VSIL…LWLL), 207 to 227 (LYWN…IIAL), 244 to 264 (LLAT…LVAW), 272 to 292 (LFVT…GSFA), and 297 to 317 (LHLG…LVVW). The EamA 1 domain occupies 12-142 (FIFAGMFILF…TLLGACGALV (131 aa)). Positions 210-316 (NTSLMNGVGS…IMVGGVYLVV (107 aa)) constitute an EamA 2 domain.

It belongs to the drug/metabolite transporter (DMT) superfamily. Plant drug/metabolite exporter (P-DME) (TC 2.A.7.4) family.

The protein localises to the membrane. The chain is WAT1-related protein At1g25270 from Arabidopsis thaliana (Mouse-ear cress).